Here is a 943-residue protein sequence, read N- to C-terminus: Receptor-like protein 35 (943 aa).

An N-terminal signal peptide occupies residues 1-31; it reads MTGSWNPTSIIIPVTLSFLLSFIHNFADVVA. The Extracellular segment spans residues 32–897; the sequence is APTRHLCLPE…EEEDEEEISW (866 aa). Residues N67, N82, N118, N147, N171, N195, N219, and N222 are each glycosylated (N-linked (GlcNAc...) asparagine). 11 LRR repeats span residues 124–148, 150–171, 172–196, 198–220, 222–244, 245–267, 268–292, 293–317, 319–340, 341–364, and 366–389; these read LQNL…IGNL, HLTS…SIEN, LSRL…IGNL, HLTS…IGNL, NLTF…IGNL, ARLT…SFGN, LNQL…LLNL, TRLS…SLLS, LMDF…LFNI, PPLI…NISS, and SNLQ…LSRF. N291 and N312 each carry an N-linked (GlcNAc...) asparagine glycan. N354 and N361 each carry an N-linked (GlcNAc...) asparagine glycan. The stretch at 390 to 414 is one LRR 12; degenerate repeat; that stretch reads VNLTLFDLSHLNTQCRPVDFSIFSH. N391 carries N-linked (GlcNAc...) asparagine glycosylation. LRR repeat units lie at residues 415-439, 440-463, 467-490, 491-514, 515-537, 544-568, 569-592, 593-617, 619-639, 640-665, 667-685, 686-709, 753-777, 778-801, 802-825, and 827-850; these read LKSL…ILPY, FKTL…SVSS, SQSI…LRTQ, HELG…LWTL, PNLF…SKKH, KPSM…ICGL, RSLN…MEKL, KSTL…IFES, RSLD…LIRF, SNLE…SLSK, QVLV…EATF, PELR…YFVK, LTIY…IGLL, KELL…MGNL, TALE…LGDL, and FLAY…QFRR. A glycan (N-linked (GlcNAc...) asparagine) is linked at N457. N521, N524, N556, N582, and N605 each carry an N-linked (GlcNAc...) asparagine glycan. N653 carries N-linked (GlcNAc...) asparagine glycosylation. N699 carries an N-linked (GlcNAc...) asparagine glycan. N-linked (GlcNAc...) asparagine glycans are attached at residues N784 and N800. N-linked (GlcNAc...) asparagine glycans are attached at residues N832, N852, and N882. The helical transmembrane segment at 898–918 threads the bilayer; the sequence is IAAAIGFIPGIVFGLTIGYIL. Topologically, residues 919-943 are cytoplasmic; it reads VSYKPEWFMNPFGRNNRRRRNTTTH.

The protein belongs to the RLP family.

Its subcellular location is the cell membrane. This Arabidopsis thaliana (Mouse-ear cress) protein is Receptor-like protein 35.